Here is a 558-residue protein sequence, read N- to C-terminus: uncharacterized protein (558 aa).

Over residues 338-354 the composition is skewed to low complexity; that stretch reads STSTSTSTSTSSSNDLN. The tract at residues 338–380 is disordered; that stretch reads STSTSTSTSTSSSNDLNLDSDSDDSDSDDSDSDSDSDSDSEID. Acidic residues predominate over residues 355–380; sequence LDSDSDDSDSDDSDSDSDSDSDSEID.

It localises to the plastid. This is an uncharacterized protein from Euglena longa (Euglenophycean alga).